The chain runs to 356 residues: Peptide chain release factor 1 (356 aa).

Q230 is subject to N5-methylglutamine. Residues 279–289 (ALDSARSEARK) show a composition bias toward basic and acidic residues. Positions 279–299 (ALDSARSEARKSQVGSGDRSE) are disordered.

This sequence belongs to the prokaryotic/mitochondrial release factor family. Methylated by PrmC. Methylation increases the termination efficiency of RF1.

The protein localises to the cytoplasm. Functionally, peptide chain release factor 1 directs the termination of translation in response to the peptide chain termination codons UAG and UAA. This is Peptide chain release factor 1 (prfA) from Caulobacter vibrioides (strain ATCC 19089 / CIP 103742 / CB 15) (Caulobacter crescentus).